The sequence spans 254 residues: MSGETTRLTEPQLRELAARGAAELDGATATDMLRWTDETFGDIGGAGGGVSGHRGWTTCNYVVASNMADAVLVDLAAKVRPGVPVIFLDTGYHFVETIGTRDAIESVYDVRVLNVTPEHTVAEQDELLGKDLFARNPHECCRLRKVVPLGKTLRGYSAWVTGLRRVDAPTRANAPLVSFDETFKLVKVNPLAAWTDQDVQEYIADNDVLVNPLVREGYPSIGCAPCTAKPAEGADPRSGRWQGLAKTECGLHAS.

[4Fe-4S] cluster-binding residues include Cys140, Cys141, Cys223, and Cys226. Catalysis depends on Cys249, which acts as the Nucleophile; cysteine thiosulfonate intermediate.

Belongs to the PAPS reductase family. CysH subfamily. Requires [4Fe-4S] cluster as cofactor.

The protein resides in the cytoplasm. The enzyme catalyses [thioredoxin]-disulfide + sulfite + AMP + 2 H(+) = adenosine 5'-phosphosulfate + [thioredoxin]-dithiol. It functions in the pathway sulfur metabolism; hydrogen sulfide biosynthesis; sulfite from sulfate. Functionally, catalyzes the formation of sulfite from adenosine 5'-phosphosulfate (APS) using thioredoxin as an electron donor. The protein is Adenosine 5'-phosphosulfate reductase of Mycobacterium bovis (strain ATCC BAA-935 / AF2122/97).